Consider the following 343-residue polypeptide: 3-isopropylmalate dehydrogenase (343 aa).

Arginine 94, arginine 104, arginine 128, and aspartate 218 together coordinate substrate. Mg(2+) contacts are provided by aspartate 218, aspartate 242, and aspartate 246. An NAD(+)-binding site is contributed by 278-290 (GSAPDIAGQNKAN).

Belongs to the isocitrate and isopropylmalate dehydrogenases family. LeuB type 2 subfamily. In terms of assembly, homodimer. Mg(2+) is required as a cofactor. The cofactor is Mn(2+).

The protein resides in the cytoplasm. The catalysed reaction is (2R,3S)-3-isopropylmalate + NAD(+) = 4-methyl-2-oxopentanoate + CO2 + NADH. It functions in the pathway amino-acid biosynthesis; L-leucine biosynthesis; L-leucine from 3-methyl-2-oxobutanoate: step 3/4. In terms of biological role, catalyzes the oxidation of 3-carboxy-2-hydroxy-4-methylpentanoate (3-isopropylmalate) to 3-carboxy-4-methyl-2-oxopentanoate. The product decarboxylates to 4-methyl-2 oxopentanoate. The protein is 3-isopropylmalate dehydrogenase of Bifidobacterium longum subsp. infantis (strain ATCC 15697 / DSM 20088 / JCM 1222 / NCTC 11817 / S12).